We begin with the raw amino-acid sequence, 173 residues long: NADH-ubiquinone oxidoreductase chain 6 (173 aa).

5 helical membrane passes run 1–21, 27–47, 48–68, 87–107, and 139–159; these read MTYF…AVAS, YGVV…LSLG, VSFV…VVFV, VVGY…VGGL, and CGVG…FVVL.

Belongs to the complex I subunit 6 family.

It localises to the mitochondrion membrane. It catalyses the reaction a ubiquinone + NADH + 5 H(+)(in) = a ubiquinol + NAD(+) + 4 H(+)(out). In terms of biological role, core subunit of the mitochondrial membrane respiratory chain NADH dehydrogenase (Complex I) that is believed to belong to the minimal assembly required for catalysis. Complex I functions in the transfer of electrons from NADH to the respiratory chain. The immediate electron acceptor for the enzyme is believed to be ubiquinone. In Larus canus (Common gull), this protein is NADH-ubiquinone oxidoreductase chain 6 (MT-ND6).